A 404-amino-acid polypeptide reads, in one-letter code: NADH-quinone oxidoreductase subunit D 2 (404 aa).

This sequence belongs to the complex I 49 kDa subunit family. In terms of assembly, NDH-1 is composed of 14 different subunits. Subunits NuoB, C, D, E, F, and G constitute the peripheral sector of the complex.

The protein localises to the cell inner membrane. It carries out the reaction a quinone + NADH + 5 H(+)(in) = a quinol + NAD(+) + 4 H(+)(out). Functionally, NDH-1 shuttles electrons from NADH, via FMN and iron-sulfur (Fe-S) centers, to quinones in the respiratory chain. The immediate electron acceptor for the enzyme in this species is believed to be ubiquinone. Couples the redox reaction to proton translocation (for every two electrons transferred, four hydrogen ions are translocated across the cytoplasmic membrane), and thus conserves the redox energy in a proton gradient. This chain is NADH-quinone oxidoreductase subunit D 2, found in Rhizobium meliloti (strain 1021) (Ensifer meliloti).